Consider the following 287-residue polypeptide: Nucleoid occlusion protein (287 aa).

The H-T-H motif DNA-binding region spans 146–165 (EALAQRVGKSQSAIANKMRL).

Belongs to the ParB family.

It localises to the cytoplasm. The protein resides in the nucleoid. In terms of biological role, effects nucleoid occlusion by binding relatively nonspecifically to DNA and preventing the assembly of the division machinery in the vicinity of the nucleoid, especially under conditions that disturb the cell cycle. It helps to coordinate cell division and chromosome segregation by preventing the formation of the Z ring through the nucleoid, which would cause chromosome breakage. The sequence is that of Nucleoid occlusion protein from Listeria monocytogenes serotype 4a (strain HCC23).